Here is a 349-residue protein sequence, read N- to C-terminus: Fructose-1,6-bisphosphatase class 1 (349 aa).

The Mg(2+) site is built by E113, D135, I137, and D138. Substrate-binding positions include 138–141, N230, Y258, and K288; that span reads DGSS. E294 is a binding site for Mg(2+).

Belongs to the FBPase class 1 family. As to quaternary structure, homotetramer. Mg(2+) is required as a cofactor.

The protein localises to the cytoplasm. It catalyses the reaction beta-D-fructose 1,6-bisphosphate + H2O = beta-D-fructose 6-phosphate + phosphate. Its pathway is carbohydrate biosynthesis; Calvin cycle. This Nostoc punctiforme (strain ATCC 29133 / PCC 73102) protein is Fructose-1,6-bisphosphatase class 1.